The chain runs to 143 residues: Transcriptional regulator MraZ (143 aa).

2 consecutive SpoVT-AbrB domains span residues 5-47 (EYQH…PMHE) and 76-119 (ATEC…SKVI).

The protein belongs to the MraZ family. Forms oligomers.

The protein localises to the cytoplasm. Its subcellular location is the nucleoid. This is Transcriptional regulator MraZ from Bacillus subtilis (strain 168).